We begin with the raw amino-acid sequence, 270 residues long: uncharacterized protein (270 aa).

A signal peptide spans 1-23 (MKKLLIILAATLVLVLGSSGNFR).

This is an uncharacterized protein from Archaeoglobus fulgidus (strain ATCC 49558 / DSM 4304 / JCM 9628 / NBRC 100126 / VC-16).